A 182-amino-acid polypeptide reads, in one-letter code: Large ribosomal subunit protein uL10 (182 aa).

The protein belongs to the universal ribosomal protein uL10 family. As to quaternary structure, part of the ribosomal stalk of the 50S ribosomal subunit. The N-terminus interacts with L11 and the large rRNA to form the base of the stalk. The C-terminus forms an elongated spine to which L12 dimers bind in a sequential fashion forming a multimeric L10(L12)X complex.

Forms part of the ribosomal stalk, playing a central role in the interaction of the ribosome with GTP-bound translation factors. This Microcystis aeruginosa (strain NIES-843 / IAM M-2473) protein is Large ribosomal subunit protein uL10.